A 148-amino-acid polypeptide reads, in one-letter code: Lysozyme C (148 aa).

Positions 1–18 (MKAVIILGLVLLSVTVQG) are cleaved as a signal peptide. Residues 19-148 (KIFERCELAR…VSQYVQGCGV (130 aa)) enclose the C-type lysozyme domain. 4 cysteine pairs are disulfide-bonded: Cys-24/Cys-146, Cys-48/Cys-134, Cys-83/Cys-99, and Cys-95/Cys-113. Residues Glu-53 and Asp-71 contribute to the active site.

This sequence belongs to the glycosyl hydrolase 22 family. Monomer.

It catalyses the reaction Hydrolysis of (1-&gt;4)-beta-linkages between N-acetylmuramic acid and N-acetyl-D-glucosamine residues in a peptidoglycan and between N-acetyl-D-glucosamine residues in chitodextrins.. Its function is as follows. Lysozymes have primarily a bacteriolytic function; those in tissues and body fluids are associated with the monocyte-macrophage system and enhance the activity of immunoagents. The chain is Lysozyme C (LYZ) from Erythrocebus patas (Red guenon).